The sequence spans 277 residues: Type IV methyl-directed restriction enzyme EcoKMcrA (277 aa).

Residues 207–257 (CENCGKNAPFYLNDGNPYLEVHHVIPLSSGGADTTDNCVALCPNCHRELHY) form the HNH domain.

Its function is as follows. Restriction of 5-methyl and 5-hydroxymethylcytosines at the specific DNA sequence 5'-C(me)CGG-3'. This Escherichia coli (strain K12) protein is Type IV methyl-directed restriction enzyme EcoKMcrA.